The chain runs to 412 residues: 43 kDa receptor-associated protein of the synapse (412 aa).

A lipid anchor (N-myristoyl glycine) is attached at Gly2. TPR repeat units follow at residues 6–39, 83–116, 123–156, 163–196, 206–239, 246–279, and 286–319; these read TKQQIEKGLQLYQSNQTEKALQVWTKVLEKSSDL, LESYLNLARSNEKLCEFHKTISYCKTCLGLPGTR, GQVSLSMGNAFLGLSVFQKALESFEKALRYAHNN, CRVCCSLGSFYAQVKDYEKALFFPCKAAELVNNY, AMSQYHMAVAYRLLGRLGSAMECCEESMKIALQH, ALCLLCFADIHRSRGDLETAFPRYDSAMSIMTEI, and VQALLGVAKCWVARKALDKALDAIERAQDLAEEV. The residue at position 196 (Tyr196) is a Phosphotyrosine. The RING-type zinc finger occupies 363 to 403; the sequence is CGLCGESIGEKNSRLQALPCSHIFHLRCLQNNGTRSCPNCR. Ser405 carries the phosphoserine modification.

It belongs to the RAPsyn family. Post-translationally, ubiquitinated by the BCR(KLHL8) complex, leading to its degradation.

The protein localises to the cell membrane. It localises to the postsynaptic cell membrane. It is found in the cytoplasm. The protein resides in the cytoskeleton. In terms of biological role, postsynaptic protein required for clustering of nicotinic acetylcholine receptors (nAChRs) at the neuromuscular junction. It may link the receptor to the underlying postsynaptic cytoskeleton, possibly by direct association with actin or spectrin. This Homo sapiens (Human) protein is 43 kDa receptor-associated protein of the synapse (RAPSN).